A 304-amino-acid polypeptide reads, in one-letter code: Carbonic anhydrase 5A, mitochondrial (304 aa).

A mitochondrion-targeting transit peptide spans 1–34 (MLRAKMLGRGPYKPLAILRHMGPLCATRPQHWRF). The Alpha-carbonic anhydrase domain occupies 35-295 (QHSYAEKHSN…LRGRNVRSSF (261 aa)). Positions 129, 131, and 154 each coordinate Zn(2+).

This sequence belongs to the alpha-carbonic anhydrase family. Requires Zn(2+) as cofactor. High in liver, also detected in heart, lung, kidney, spleen and intestine.

The protein localises to the mitochondrion. The enzyme catalyses hydrogencarbonate + H(+) = CO2 + H2O. Its function is as follows. Mitochondrial carbonic anhydrase that catalyzes the reversible conversion of carbon dioxide to bicarbonate/HCO3. Mitochondria are impermeable to HCO3, and thus this intramitochondrial carbonic anhydrase is pivotal in providing HCO3 for multiple mitochondrial enzymes that catalyze the formation of essential metabolites of intermediary metabolism in the urea and Krebs cycles. This chain is Carbonic anhydrase 5A, mitochondrial, found in Rattus norvegicus (Rat).